The chain runs to 60 residues: Ixodegrin-Ip (60 aa).

The N-terminal stretch at 1–21 (MNAAFIAALFILGALTLDAMA) is a signal peptide. The Cell attachment site signature appears at 49–51 (RGD).

The protein belongs to the ixodegrin family. Contains 3 disulfide bonds. As to expression, expressed in salivary glands.

It localises to the secreted. Functionally, tick salivary platelet aggregation inhibitor that plays an important part in the anti-hemostatic strategy of ticks. Inhibits platelet aggregation induced by ADP, thrombin and thromboxane A2 (TXA2). Blocks platelet adhesion to soluble collagen (most probably through the binding to alpha-2/beta-1 integrin (ITGA2/ITGB1)) and binds to purified glycoprotein IIb/IIIa (ITGA2B/ITGB3) in a dose-dependent manner. In vivo, reduces thrombus weight effectively in a rat arteriovenous shunt model and inhibits thrombosis in a carrageenan-induced mouse tail thrombosis model. This Ixodes pacificus (Western black-legged tick) protein is Ixodegrin-Ip.